The following is a 355-amino-acid chain: Probable butyrate kinase (355 aa).

The protein belongs to the acetokinase family.

It is found in the cytoplasm. It catalyses the reaction butanoate + ATP = butanoyl phosphate + ADP. This chain is Probable butyrate kinase, found in Clostridium botulinum (strain Eklund 17B / Type B).